The sequence spans 90 residues: Acylphosphatase (90 aa).

Positions 4–90 (RMYVKVYGIV…KGEFNNFDTY (87 aa)) constitute an Acylphosphatase-like domain. Residues arginine 19 and asparagine 37 contribute to the active site.

The protein belongs to the acylphosphatase family.

The enzyme catalyses an acyl phosphate + H2O = a carboxylate + phosphate + H(+). The chain is Acylphosphatase (acyP) from Sulfurisphaera tokodaii (strain DSM 16993 / JCM 10545 / NBRC 100140 / 7) (Sulfolobus tokodaii).